A 207-amino-acid polypeptide reads, in one-letter code: Cytochrome c biogenesis ATP-binding export protein CcmA (207 aa).

One can recognise an ABC transporter domain in the interval 4–207; sequence LEVRELLCER…RISLTQTRAV (204 aa). 36–43 provides a ligand contact to ATP; the sequence is GSNGAGKT.

It belongs to the ABC transporter superfamily. CcmA exporter (TC 3.A.1.107) family. As to quaternary structure, the complex is composed of two ATP-binding proteins (CcmA) and two transmembrane proteins (CcmB).

It localises to the cell inner membrane. It catalyses the reaction heme b(in) + ATP + H2O = heme b(out) + ADP + phosphate + H(+). Part of the ABC transporter complex CcmAB involved in the biogenesis of c-type cytochromes; once thought to export heme, this seems not to be the case, but its exact role is uncertain. Responsible for energy coupling to the transport system. The chain is Cytochrome c biogenesis ATP-binding export protein CcmA from Escherichia coli O157:H7.